The chain runs to 382 residues: Succinate--CoA ligase [ADP-forming] subunit beta (382 aa).

The region spanning 9-240 (KELFSKYGVK…PRDVSEFEMY (232 aa)) is the ATP-grasp domain. Residues K45, 52–54 (GRG), V94, and E99 each bind ATP. The Mg(2+) site is built by N193 and D207. Residues N260 and 317–319 (GIT) contribute to the substrate site.

It belongs to the succinate/malate CoA ligase beta subunit family. In terms of assembly, heterotetramer of two alpha and two beta subunits. Mg(2+) serves as cofactor.

It carries out the reaction succinate + ATP + CoA = succinyl-CoA + ADP + phosphate. The enzyme catalyses GTP + succinate + CoA = succinyl-CoA + GDP + phosphate. It participates in carbohydrate metabolism; tricarboxylic acid cycle; succinate from succinyl-CoA (ligase route): step 1/1. In terms of biological role, succinyl-CoA synthetase functions in the citric acid cycle (TCA), coupling the hydrolysis of succinyl-CoA to the synthesis of either ATP or GTP and thus represents the only step of substrate-level phosphorylation in the TCA. The beta subunit provides nucleotide specificity of the enzyme and binds the substrate succinate, while the binding sites for coenzyme A and phosphate are found in the alpha subunit. The sequence is that of Succinate--CoA ligase [ADP-forming] subunit beta from Pyrobaculum arsenaticum (strain DSM 13514 / JCM 11321 / PZ6).